A 325-amino-acid polypeptide reads, in one-letter code: Replication factor C small subunit (325 aa).

45–52 (GPPGTGKT) contributes to the ATP binding site.

It belongs to the activator 1 small subunits family. RfcS subfamily. Heteromultimer composed of small subunits (RfcS) and large subunits (RfcL).

Functionally, part of the RFC clamp loader complex which loads the PCNA sliding clamp onto DNA. This chain is Replication factor C small subunit, found in Sulfolobus acidocaldarius (strain ATCC 33909 / DSM 639 / JCM 8929 / NBRC 15157 / NCIMB 11770).